Consider the following 46-residue polypeptide: Light-harvesting protein B-800/850 beta 2 chain (46 aa).

The Cytoplasmic segment spans residues 2-25 (AERSLSGLTEEEAVAVHAQFQTTF). Positions 18 and 36 each coordinate a bacteriochlorophyll. Residues 26 to 46 (SAFIVLAAVAHVLVWVWKPWF) form a helical membrane-spanning segment.

It belongs to the antenna complex beta subunit family. As to quaternary structure, the core complex is formed by different alpha and beta chains, binding bacteriochlorophyll molecules, and arranged most probably in tetrameric structures disposed around the reaction center.

The protein resides in the cell inner membrane. Antenna complexes are light-harvesting systems, which transfer the excitation energy to the reaction centers. This is Light-harvesting protein B-800/850 beta 2 chain (B2) from Magnetospirillum molischianum (Rhodospirillum molischianum).